The following is a 209-amino-acid chain: FMN-dependent NADH:quinone oxidoreductase 2 (209 aa).

17–19 (SAS) serves as a coordination point for FMN.

The protein belongs to the azoreductase type 1 family. In terms of assembly, homodimer. FMN is required as a cofactor.

It carries out the reaction 2 a quinone + NADH + H(+) = 2 a 1,4-benzosemiquinone + NAD(+). The catalysed reaction is N,N-dimethyl-1,4-phenylenediamine + anthranilate + 2 NAD(+) = 2-(4-dimethylaminophenyl)diazenylbenzoate + 2 NADH + 2 H(+). Quinone reductase that provides resistance to thiol-specific stress caused by electrophilic quinones. Functionally, also exhibits azoreductase activity. Catalyzes the reductive cleavage of the azo bond in aromatic azo compounds to the corresponding amines. This Lactiplantibacillus plantarum (strain ATCC BAA-793 / NCIMB 8826 / WCFS1) (Lactobacillus plantarum) protein is FMN-dependent NADH:quinone oxidoreductase 2.